We begin with the raw amino-acid sequence, 84 residues long: Toxin-like TcoNTxP1 (84 aa).

The signal sequence occupies residues 1-19 (MKRMILFTSCLLLIDIVVG). One can recognise an LCN-type CS-alpha/beta domain in the interval 21–82 (KEGYPADSKG…VWDSATNKCG (62 aa)). 4 disulfide bridges follow: C31–C81, C35–C57, C43–C62, and C47–C64. Cysteine amide is present on C81. The propeptide occupies 82–84 (GKK).

In terms of tissue distribution, expressed by the venom gland.

Its subcellular location is the secreted. Functionally, this protein is not toxic. It induces an immune response similar to that induced by whole venom. Thus, polyclonal antibodies raised against this protein can neutralize the effects of the venom. This Tityus costatus (Brazilian scorpion) protein is Toxin-like TcoNTxP1.